Reading from the N-terminus, the 267-residue chain is Large ribosomal subunit protein uL4 (267 aa).

It belongs to the universal ribosomal protein uL4 family. Part of the 50S ribosomal subunit.

In terms of biological role, one of the primary rRNA binding proteins, this protein initially binds near the 5'-end of the 23S rRNA. It is important during the early stages of 50S assembly. It makes multiple contacts with different domains of the 23S rRNA in the assembled 50S subunit and ribosome. Its function is as follows. Forms part of the polypeptide exit tunnel. In Saccharolobus islandicus (strain L.S.2.15 / Lassen #1) (Sulfolobus islandicus), this protein is Large ribosomal subunit protein uL4.